A 98-amino-acid chain; its full sequence is NADH-ubiquinone oxidoreductase chain 4L (98 aa).

Helical transmembrane passes span 1–21 (MSMV…GLLM), 29–49 (SLLC…VAIL), and 61–81 (IILL…LVMV).

It belongs to the complex I subunit 4L family. As to quaternary structure, core subunit of respiratory chain NADH dehydrogenase (Complex I) which is composed of 45 different subunits.

The protein localises to the mitochondrion inner membrane. It catalyses the reaction a ubiquinone + NADH + 5 H(+)(in) = a ubiquinol + NAD(+) + 4 H(+)(out). In terms of biological role, core subunit of the mitochondrial membrane respiratory chain NADH dehydrogenase (Complex I) which catalyzes electron transfer from NADH through the respiratory chain, using ubiquinone as an electron acceptor. Part of the enzyme membrane arm which is embedded in the lipid bilayer and involved in proton translocation. The polypeptide is NADH-ubiquinone oxidoreductase chain 4L (MT-ND4L) (Puma concolor (Mountain lion)).